The primary structure comprises 222 residues: uncharacterized protein (222 aa).

A disordered region spans residues 142–222 (ARRGGCVHPP…LPDPPSAGHL (81 aa)). Low complexity predominate over residues 160–169 (QSRSISSRRA). Residues 182–196 (PRRRPHRHRTRPQTR) are compositionally biased toward basic residues.

Belongs to the Rv1128c/1148c/1588c/1702c/1945/3466 family.

This is an uncharacterized protein from Mycobacterium tuberculosis (strain CDC 1551 / Oshkosh).